Reading from the N-terminus, the 208-residue chain is Large ribosomal subunit protein bL25 (208 aa).

This sequence belongs to the bacterial ribosomal protein bL25 family. CTC subfamily. As to quaternary structure, part of the 50S ribosomal subunit; part of the 5S rRNA/L5/L18/L25 subcomplex. Contacts the 5S rRNA. Binds to the 5S rRNA independently of L5 and L18.

In terms of biological role, this is one of the proteins that binds to the 5S RNA in the ribosome where it forms part of the central protuberance. The protein is Large ribosomal subunit protein bL25 of Burkholderia pseudomallei (strain K96243).